A 249-amino-acid polypeptide reads, in one-letter code: Imidazole glycerol phosphate synthase subunit HisF (249 aa).

Active-site residues include D11 and D130.

The protein belongs to the HisA/HisF family. In terms of assembly, heterodimer of HisH and HisF.

It is found in the cytoplasm. The enzyme catalyses 5-[(5-phospho-1-deoxy-D-ribulos-1-ylimino)methylamino]-1-(5-phospho-beta-D-ribosyl)imidazole-4-carboxamide + L-glutamine = D-erythro-1-(imidazol-4-yl)glycerol 3-phosphate + 5-amino-1-(5-phospho-beta-D-ribosyl)imidazole-4-carboxamide + L-glutamate + H(+). Its pathway is amino-acid biosynthesis; L-histidine biosynthesis; L-histidine from 5-phospho-alpha-D-ribose 1-diphosphate: step 5/9. Functionally, IGPS catalyzes the conversion of PRFAR and glutamine to IGP, AICAR and glutamate. The HisF subunit catalyzes the cyclization activity that produces IGP and AICAR from PRFAR using the ammonia provided by the HisH subunit. The chain is Imidazole glycerol phosphate synthase subunit HisF from Sulfolobus acidocaldarius (strain ATCC 33909 / DSM 639 / JCM 8929 / NBRC 15157 / NCIMB 11770).